Here is a 183-residue protein sequence, read N- to C-terminus: Ribosome-binding factor A (183 aa).

Residues 132 to 183 (PAGEADPYRDNGSVAQSPAPGGLGIRTSDGPEAVEAPLTCGGDTGDDDRPKE) form a disordered region.

The protein belongs to the RbfA family. Monomer. Binds 30S ribosomal subunits, but not 50S ribosomal subunits or 70S ribosomes.

The protein localises to the cytoplasm. One of several proteins that assist in the late maturation steps of the functional core of the 30S ribosomal subunit. Associates with free 30S ribosomal subunits (but not with 30S subunits that are part of 70S ribosomes or polysomes). Required for efficient processing of 16S rRNA. May interact with the 5'-terminal helix region of 16S rRNA. The protein is Ribosome-binding factor A of Mycobacterium tuberculosis (strain ATCC 25177 / H37Ra).